The primary structure comprises 123 residues: MAKLTKESFISSLKEMSIKEVMELVEAMKEEFGIDPSAVAVAAAAPAAEAEEKKSTLSVILKSDNGKKLAIVKAVKELLNLALMDANKLVSTLPATLKENIPAAEAEALKAKLVEAGADVELK.

This sequence belongs to the bacterial ribosomal protein bL12 family. In terms of assembly, homodimer. Part of the ribosomal stalk of the 50S ribosomal subunit. Forms a multimeric L10(L12)X complex, where L10 forms an elongated spine to which 2 to 4 L12 dimers bind in a sequential fashion. Binds GTP-bound translation factors.

Its function is as follows. Forms part of the ribosomal stalk which helps the ribosome interact with GTP-bound translation factors. Is thus essential for accurate translation. The sequence is that of Large ribosomal subunit protein bL12 from Mycoplasmopsis agalactiae (strain NCTC 10123 / CIP 59.7 / PG2) (Mycoplasma agalactiae).